The following is a 546-amino-acid chain: Methionine--tRNA ligase (546 aa).

A 'HIGH' region motif is present at residues 15 to 25; sequence PYANGPIHLGH. 4 residues coordinate Zn(2+): C146, C149, C159, and C162. A 'KMSKS' region motif is present at residues 332–336; it reads KMSKS. Residue K335 coordinates ATP.

This sequence belongs to the class-I aminoacyl-tRNA synthetase family. MetG type 1 subfamily. Monomer. Zn(2+) is required as a cofactor.

It localises to the cytoplasm. It catalyses the reaction tRNA(Met) + L-methionine + ATP = L-methionyl-tRNA(Met) + AMP + diphosphate. Is required not only for elongation of protein synthesis but also for the initiation of all mRNA translation through initiator tRNA(fMet) aminoacylation. The chain is Methionine--tRNA ligase from Coxiella burnetii (strain Dugway 5J108-111).